The sequence spans 496 residues: Glycerol kinase (496 aa).

Threonine 12 provides a ligand contact to ADP. Residues threonine 12, threonine 13, and serine 14 each contribute to the ATP site. A sn-glycerol 3-phosphate-binding site is contributed by threonine 12. Position 16 (arginine 16) interacts with ADP. The sn-glycerol 3-phosphate site is built by arginine 82, glutamate 83, and tyrosine 134. Positions 82, 83, and 134 each coordinate glycerol. Histidine 230 is modified (phosphohistidine; by HPr). Position 244 (aspartate 244) interacts with sn-glycerol 3-phosphate. The glycerol site is built by aspartate 244 and glutamine 245. ADP contacts are provided by threonine 266 and glycine 309. 4 residues coordinate ATP: threonine 266, glycine 309, glutamine 313, and glycine 410. Residues glycine 410 and asparagine 414 each coordinate ADP.

The protein belongs to the FGGY kinase family. Homotetramer and homodimer (in equilibrium). In terms of processing, the phosphoenolpyruvate-dependent sugar phosphotransferase system (PTS), including enzyme I, and histidine-containing protein (HPr) are required for the phosphorylation, which leads to the activation of the enzyme.

It catalyses the reaction glycerol + ATP = sn-glycerol 3-phosphate + ADP + H(+). It participates in polyol metabolism; glycerol degradation via glycerol kinase pathway; sn-glycerol 3-phosphate from glycerol: step 1/1. Its activity is regulated as follows. Activated by phosphorylation and inhibited by fructose 1,6-bisphosphate (FBP). Its function is as follows. Key enzyme in the regulation of glycerol uptake and metabolism. Catalyzes the phosphorylation of glycerol to yield sn-glycerol 3-phosphate. This is Glycerol kinase from Geobacillus kaustophilus (strain HTA426).